The sequence spans 1055 residues: Focal adhesion kinase 1 (1055 aa).

The tract at residues 1–29 is disordered; the sequence is MAAAYLDPNLNHTPSSSTKTHLGTGTERS. N-acetylalanine is present on A2. Position 5 is a phosphotyrosine (Y5). The span at 10 to 27 shows a compositional bias: polar residues; that stretch reads LNHTPSSSTKTHLGTGTE. A Phosphothreonine modification is found at T13. 2 positions are modified to phosphoserine: S29 and S54. Positions 35 to 355 constitute an FERM domain; the sequence is RVLKVFHYFE…GYCRLVNGAT (321 aa). K152 participates in a covalent cross-link: Glycyl lysine isopeptide (Lys-Gly) (interchain with G-Cter in SUMO). Y397 carries the post-translational modification Phosphotyrosine; by autocatalysis. Residue Y407 is modified to Phosphotyrosine. One can recognise a Protein kinase domain in the interval 422 to 680; sequence IELGRCIGEG…ELKAQLSTIL (259 aa). Residues 428–434, K454, and 500–502 each bind ATP; these read IGEGQFG and ELC. Residue D546 is the Proton acceptor of the active site. Phosphotyrosine occurs at positions 570 and 576. Position 577 is a phosphotyrosine; by RET and SRC (Y577). S580 carries the phosphoserine modification. The span at 685–697 shows a compositional bias: basic and acidic residues; the sequence is VQQEERMRMESRR. Disordered stretches follow at residues 685-734 and 837-923; these read VQQE…PSPQ and VRLS…LDRS. Residues 707–1055 are interaction with TGFB1I1; sequence GSDEAPPKPS…LKMLGQTRPH (349 aa). At S722 the chain carries Phosphoserine. The residue at position 732 (S732) is a Phosphoserine; by CDK5. Positions 837–849 are enriched in basic and acidic residues; the sequence is VRLSRGSIDREDG. S843 carries the phosphoserine modification. Y861 is subject to Phosphotyrosine. Residues 869–880 show a composition bias toward pro residues; it reads PAAPPKKPPRPG. Residues 886–896 are compositionally biased toward polar residues; the sequence is SNLSSISSPAE. The residue at position 913 (S913) is a Phosphoserine. Positions 915–1055 are interaction with ARHGEF28; it reads PPTANLDRSN…LKMLGQTRPH (141 aa). T917 is subject to Phosphothreonine. Position 928 is a phosphotyrosine (Y928).

Belongs to the protein kinase superfamily. Tyr protein kinase family. FAK subfamily. Interacts with GIT1. Component of a complex that contains at least FER, CTTN and PTK2/FAK1. Interacts with BMX. Interacts with STEAP4. Interacts with ZFYVE21. Interacts with ESR1. Interacts with PIK3R1 or PIK3R2. Interacts with FGR, FLT4 and RET. Interacts with EPHA2 in resting cells; activation of EPHA2 recruits PTPN11, leading to dephosphorylation of PTK2/FAK1 and dissociation of the complex. Interacts with EPHA1 (kinase activity-dependent). Interacts with P53/TP53. Interacts (via first Pro-rich region) with CAS family members (via SH3 domain), including BCAR1, BCAR3, and CASS4. Interacts with NEDD9 (via SH3 domain). Interacts with TGFB1I1. Interacts with SRC, GRB2 and GRB7. Interacts with ARHGEF28. Interacts with SHB. Part of a complex composed of THSD1, PTK2/FAK1, TLN1 and VCL. Interacts with PXN and TLN1. Interacts with SORBS1. Interacts with STAT1. Interacts with WASL. Interacts with ARHGAP26 and SHC1. Interacts with RB1CC1; this inhibits PTK2/FAK1 activity and activation of downstream signaling pathways. Interacts with ARHGEF7. Interacts with MDM2. Interacts with PIAS1. Interacts with DCC. Interacts with LPXN (via LD motif 3). Interacts with MISP. Interacts with EMP2; regulates PTK2 activation and localization. Interacts with DSCAM. Interacts with AMBRA1. Interacts (when tyrosine-phosphorylated) with tensin TNS1; the interaction is increased by phosphorylation of TNS1. Post-translationally, phosphorylated on tyrosine residues upon activation, e.g. upon integrin signaling. Tyr-397 is the major autophosphorylation site, but other kinases can also phosphorylate this residue. Phosphorylation at Tyr-397 promotes interaction with SRC and SRC family members, leading to phosphorylation at Tyr-576, Tyr-577 and at additional tyrosine residues. FGR promotes phosphorylation at Tyr-397 and Tyr-576. FER promotes phosphorylation at Tyr-577, Tyr-861 and Tyr-928, even when cells are not adherent. Tyr-397, Tyr-576 and Ser-722 are phosphorylated only when cells are adherent. Phosphorylation at Tyr-397 is important for interaction with BMX, PIK3R1 and SHC1. Phosphorylation at Tyr-928 is important for interaction with GRB2. Dephosphorylated by PTPN11; PTPN11 is recruited to PTK2 via EPHA2 (tyrosine phosphorylated). Microtubule-induced dephosphorylation at Tyr-397 is crucial for the induction of focal adhesion disassembly; this dephosphorylation could be catalyzed by PTPN11 and regulated by ZFYVE21. Phosphorylation on tyrosine residues is enhanced by NTN1. In terms of processing, sumoylated; this enhances autophosphorylation.

It is found in the cell junction. Its subcellular location is the focal adhesion. It localises to the cell membrane. The protein localises to the cytoplasm. The protein resides in the perinuclear region. It is found in the cell cortex. Its subcellular location is the cytoskeleton. It localises to the microtubule organizing center. The protein localises to the centrosome. The protein resides in the nucleus. It is found in the cilium basal body. The catalysed reaction is L-tyrosyl-[protein] + ATP = O-phospho-L-tyrosyl-[protein] + ADP + H(+). Subject to autoinhibition, mediated by interactions between the FERM domain and the kinase domain. Activated by autophosphorylation at Tyr-397. This promotes interaction with SRC and phosphorylation at Tyr-576 and Tyr-577 in the kinase activation loop by SRC. Phosphorylation at Tyr-397, Tyr-576 and Tyr-577 is required for maximal kinase activity. Its function is as follows. Non-receptor protein-tyrosine kinase that plays an essential role in regulating cell migration, adhesion, spreading, reorganization of the actin cytoskeleton, formation and disassembly of focal adhesions and cell protrusions, cell cycle progression, cell proliferation and apoptosis. Required for early embryonic development and placenta development. Required for embryonic angiogenesis, normal cardiomyocyte migration and proliferation, and normal heart development. Regulates axon growth and neuronal cell migration, axon branching and synapse formation; required for normal development of the nervous system. Plays a role in osteogenesis and differentiation of osteoblasts. Functions in integrin signal transduction, but also in signaling downstream of numerous growth factor receptors, G-protein coupled receptors (GPCR), EPHA2, netrin receptors and LDL receptors. Forms multisubunit signaling complexes with SRC and SRC family members upon activation; this leads to the phosphorylation of additional tyrosine residues, creating binding sites for scaffold proteins, effectors and substrates. Regulates numerous signaling pathways. Promotes activation of phosphatidylinositol 3-kinase and the AKT1 signaling cascade. Promotes activation of MAPK1/ERK2, MAPK3/ERK1 and the MAP kinase signaling cascade. Promotes localized and transient activation of guanine nucleotide exchange factors (GEFs) and GTPase-activating proteins (GAPs), and thereby modulates the activity of Rho family GTPases. Signaling via CAS family members mediates activation of RAC1. Phosphorylates NEDD9 following integrin stimulation. Recruits the ubiquitin ligase MDM2 to P53/TP53 in the nucleus, and thereby regulates P53/TP53 activity, P53/TP53 ubiquitination and proteasomal degradation. Phosphorylates SRC; this increases SRC kinase activity. Phosphorylates ACTN1, ARHGEF7, GRB7, RET and WASL. Promotes phosphorylation of PXN and STAT1; most likely PXN and STAT1 are phosphorylated by a SRC family kinase that is recruited to autophosphorylated PTK2/FAK1, rather than by PTK2/FAK1 itself. Promotes phosphorylation of BCAR1; GIT2 and SHC1; this requires both SRC and PTK2/FAK1. Promotes phosphorylation of BMX and PIK3R1. Functionally, does not contain a kinase domain and inhibits PTK2/FAK1 phosphorylation and signaling. Its enhanced expression can attenuate the nuclear accumulation of LPXN and limit its ability to enhance serum response factor (SRF)-dependent gene transcription. The sequence is that of Focal adhesion kinase 1 from Rattus norvegicus (Rat).